Here is a 361-residue protein sequence, read N- to C-terminus: Fructose-bisphosphate aldolase (361 aa).

Position 63 (serine 63) interacts with D-glyceraldehyde 3-phosphate. Aspartate 110 acts as the Proton donor in catalysis. Residues histidine 111, aspartate 145, glutamate 175, and histidine 227 each coordinate Zn(2+). Position 228 (glycine 228) interacts with dihydroxyacetone phosphate. Residue histidine 266 coordinates Zn(2+). Dihydroxyacetone phosphate-binding positions include 267–269 and 288–291; these read GGS and NLDT.

The protein belongs to the class II fructose-bisphosphate aldolase family. Homodimer. It depends on Zn(2+) as a cofactor.

The enzyme catalyses beta-D-fructose 1,6-bisphosphate = D-glyceraldehyde 3-phosphate + dihydroxyacetone phosphate. It participates in carbohydrate degradation; glycolysis; D-glyceraldehyde 3-phosphate and glycerone phosphate from D-glucose: step 4/4. In terms of biological role, catalyzes the aldol condensation of dihydroxyacetone phosphate (DHAP or glycerone-phosphate) with glyceraldehyde 3-phosphate (G3P) to form fructose 1,6-bisphosphate (FBP) in gluconeogenesis and the reverse reaction in glycolysis. In Kluyveromyces lactis (strain ATCC 8585 / CBS 2359 / DSM 70799 / NBRC 1267 / NRRL Y-1140 / WM37) (Yeast), this protein is Fructose-bisphosphate aldolase (FBA1).